A 181-amino-acid chain; its full sequence is Ribosome-recycling factor (181 aa).

The segment at 131-154 is disordered; that stretch reads RRDAMDSVKKEKEMPEDDVRKAEN.

The protein belongs to the RRF family.

The protein resides in the cytoplasm. Functionally, responsible for the release of ribosomes from messenger RNA at the termination of protein biosynthesis. May increase the efficiency of translation by recycling ribosomes from one round of translation to another. The polypeptide is Ribosome-recycling factor (Leuconostoc citreum (strain KM20)).